The following is a 671-amino-acid chain: Envelope glycoprotein (671 aa).

Positions 1–22 (MKPPAGMVFLWVLTSLGAGIGA) are cleaved as a signal peptide. Topologically, residues 23–611 (KIVKEGNPHQ…YNKSPWFTTL (589 aa)) are extracellular. Intrachain disulfides connect cysteine 121–cysteine 142 and cysteine 134–cysteine 147. Residues asparagine 169 and asparagine 281 are each glycosylated (N-linked (GlcNAc...) asparagine; by host). A disordered region spans residues 265-310 (VQPPRAPTQTPRVNPVNSTLSPSLGYPAPAPGPRPPYPTSPSRPGT). A compositionally biased stretch (polar residues) spans 271 to 286 (PTQTPRVNPVNSTLSP). Residues 292 to 305 (APAPGPRPPYPTSP) are compositionally biased toward pro residues. Asparagine 326 and asparagine 331 each carry an N-linked (GlcNAc...) asparagine; by host glycan. The CXXC signature appears at 336–339 (CWLC). N-linked (GlcNAc...) asparagine; by host glycans are attached at residues asparagine 355, asparagine 358, asparagine 415, and asparagine 435. A fusion peptide region spans residues 473–493 (VSLTVALLLGGLTMGSLAAGI). Coiled-coil stretches lie at residues 501–550 (IETN…LLFL) and 560–596 (KEEC…SQQG). An immunosuppression region spans residues 539 to 555 (LQNRRGLDLLFLQEGGL). A CX6CC motif is present at residues 556 to 564 (CAALKEECC). A helical membrane pass occupies residues 612 to 632 (VSSLMVPLILLLLILMFGPCI). A lipid anchor (S-palmitoyl cysteine; by host) is attached at cysteine 631. Residues 633 to 671 (LNHLLQFIRERLSVIQALVLTQQYHQLRQFDAERPDAIE) are Cytoplasmic-facing. A YXXL motif; contains endocytosis signal motif is present at residues 656–659 (YHQL).

The mature envelope protein (Env) consists of a trimer of SU-TM heterodimers attached by noncovalent interactions or by a labile interchain disulfide bond. Specific enzymatic cleavages in vivo yield mature proteins. Envelope glycoproteins are synthesized as an inactive precursor that is N-glycosylated and processed likely by host cell furin or by a furin-like protease in the Golgi to yield the mature SU and TM proteins. The cleavage site between SU and TM requires the minimal sequence [KR]-X-[KR]-R. The R-peptide is released from the C-terminus of the cytoplasmic tail of the TM protein upon particle formation as a result of proteolytic cleavage by the viral protease. Cleavage of this peptide is required for TM to become fusogenic. Post-translationally, the transmembrane protein is palmitoylated. In terms of processing, the R-peptide is palmitoylated.

Its subcellular location is the virion membrane. It is found in the host cell membrane. Functionally, the surface protein (SU) attaches the virus to the host cell by binding to its receptor. This interaction triggers the refolding of the transmembrane protein (TM) and is thought to activate its fusogenic potential by unmasking its fusion peptide. Fusion occurs at the host cell plasma membrane. The transmembrane protein (TM) acts as a class I viral fusion protein. Under the current model, the protein has at least 3 conformational states: pre-fusion native state, pre-hairpin intermediate state, and post-fusion hairpin state. During viral and target cell membrane fusion, the coiled coil regions (heptad repeats) assume a trimer-of-hairpins structure, positioning the fusion peptide in close proximity to the C-terminal region of the ectodomain. The formation of this structure appears to drive apposition and subsequent fusion of viral and target cell membranes. Membranes fusion leads to delivery of the nucleocapsid into the cytoplasm. In Felidae (cat family), this protein is Envelope glycoprotein (env).